The chain runs to 465 residues: MAP kinase-interacting serine/threonine-protein kinase 2 (465 aa).

Positions Glu-23–Thr-72 are disordered. Residues Lys-60 to Lys-66 carry the Nuclear localization signal motif. Ser-74 bears the Phosphoserine mark. A Protein kinase domain is found at Gln-84–Cys-388. Residues Leu-90–Val-98 and Lys-113 each bind ATP. Glu-160–Met-162 contacts staurosporine. The active-site Proton acceptor is the Asp-205. Glu-209 contributes to the staurosporine binding site. Phosphothreonine occurs at positions 244 and 249. Zn(2+) contacts are provided by Cys-299, Cys-311, and Cys-314. Thr-379 is modified (phosphothreonine). Residues Ser-437 and Ser-440 each carry the phosphoserine modification. The short motif at Leu-444–Arg-448 is the MAP kinase binding element. The residue at position 452 (Ser-452) is a Phosphoserine.

It belongs to the protein kinase superfamily. CAMK Ser/Thr protein kinase family. Monomer. Interacts with the C-terminal regions of EIF4G1 and EIF4G2; this interaction is promoted when MAPK pathways are repressed but repressed upon ERK proteins activation. Also binds to dephosphorylated MAPK3/ERK1 and MAPK1/ERK2. Isoform 1 interaction with phosphorylated MAPK3/ERK1 and MAPK1/ERK2 protects it from dephosphorylation and inactivation. Isoform 2 interacts with ESR2 and EIF4E in the nucleus. Mg(2+) serves as cofactor. Zn(2+) is required as a cofactor. Dual phosphorylation of Thr-244 and Thr-249 activates the kinase. Phosphorylation of Thr-379 activates the kinase. Phosphorylated upon arsenic trioxide As(2)O(3) treatment. Phosphorylated by MAPK1/ERK2, MAPK11 and MAPK14. Dephosphorylated by PP2A. Ubiquitously expressed in all tissues examined. Isoform 2 is expressed at higher levels in the ovary than is isoform 1.

The protein resides in the nucleus. Its subcellular location is the PML body. It is found in the cytoplasm. It carries out the reaction L-seryl-[protein] + ATP = O-phospho-L-seryl-[protein] + ADP + H(+). The enzyme catalyses L-threonyl-[protein] + ATP = O-phospho-L-threonyl-[protein] + ADP + H(+). With respect to regulation, inhibited by CGP57380 and staurosporine. Activated by phosphorylation in a negative-feedback regulatory manner in response to chemotherapy (e.g. cytarabine) and thus impairs the generation of antileukemic responses. Serine/threonine-protein kinase that phosphorylates SFPQ/PSF, HNRNPA1 and EIF4E. May play a role in the response to environmental stress and cytokines. Appears to regulate translation by phosphorylating EIF4E, thus increasing the affinity of this protein for the 7-methylguanosine-containing mRNA cap. Required for mediating PP2A-inhibition-induced EIF4E phosphorylation. Triggers EIF4E shuttling from cytoplasm to nucleus. Isoform 1 displays a high basal kinase activity, but isoform 2 exhibits a very low kinase activity. Acts as a mediator of the suppressive effects of IFNgamma on hematopoiesis. Negative regulator for signals that control generation of arsenic trioxide As(2)O(3)-dependent apoptosis and anti-leukemic responses. Involved in anti-apoptotic signaling in response to serum withdrawal. This chain is MAP kinase-interacting serine/threonine-protein kinase 2 (MKNK2), found in Homo sapiens (Human).